Consider the following 382-residue polypeptide: MSLNIFWFLPTHGDGKYLGTSDGARAVDHGYLQQIAQAADRLGFGGVLIPTGRSCEDSWLVAASLIPVTQHLKFLVALRPGIISPTVAARQAATLDRLSNGRALFNLVTGGDPDELAGDGLHLNHQERYEASVEFTRIWRKVLEGENVDYDGKHIQVKGAKLLYPPIQQPRPPLYFGGSSEAAQDLAAEQVELYLTWGEPPAAVAEKIAQVREKAAAQGREVRFGIRLHVIVRETNEEAWAAADRLISHLDDETIARAQASLARFDSVGQQRMAALHGGNRDNLEVSPNLWAGVGLVRGGAGTALVGDGPTVAARVKEYADLGIDTFIFSGYPHLEESYRVAELLFPHLDVQRPEQPKTRGYVSPFGEMVANDILPKSVSQS.

Belongs to the SsuD family. In terms of assembly, homotetramer.

The catalysed reaction is an alkanesulfonate + FMNH2 + O2 = an aldehyde + FMN + sulfite + H2O + 2 H(+). Its function is as follows. Catalyzes the desulfonation of aliphatic sulfonates. In Buttiauxella sp. (strain PNBS), this protein is Alkanesulfonate monooxygenase.